Consider the following 129-residue polypeptide: Small ribosomal subunit protein uS11 (129 aa).

The protein belongs to the universal ribosomal protein uS11 family. As to quaternary structure, part of the 30S ribosomal subunit. Interacts with proteins S7 and S18. Binds to IF-3.

Its function is as follows. Located on the platform of the 30S subunit, it bridges several disparate RNA helices of the 16S rRNA. Forms part of the Shine-Dalgarno cleft in the 70S ribosome. The polypeptide is Small ribosomal subunit protein uS11 (Yersinia pseudotuberculosis serotype O:1b (strain IP 31758)).